Reading from the N-terminus, the 485-residue chain is MEYRLLVGLEVHVQLGLKTKAFCGCKNDFGGIPNSRTCPTCLGLPGALPSVNKELINSAILAGHATNSKIRNIVKFDRKHYVYPDLPKGYQISQNDAPICNNGFIFIETSSGLKKINIVRIHMEEDSGKSLHLLESENRSYIDFNRAGAPLLEIVSEPDINSGEEAVAYLNSLREIFRYLDLSDCSMENGSFRCDVNVNLLINENDVEYKTPISEIKNLNSFKSIKLAIDYEESRQKEEWILHRKTFESIGKHTMGFDDKRGITVFQRSKETVADYRYIKDPDLPLIKLDDVYIESIKSNKMVELPLDTRIRLKEQYGLSNFDVVTLTSDKNLVKYFEEAAMTSSDPKRVSNWILSEVLSVLNDREISILDFNLPPSYISELVEFIVSGKVSGKIAKEIFLEMLKRNVSPAIIINEKNLEQISDKSFIESVVLEVLNENPKSIELYKKGKSHAIKFMMGQIMLKTSGRVNPAFANEILMNKLRDV.

This sequence belongs to the GatB/GatE family. GatB subfamily. In terms of assembly, heterotrimer of A, B and C subunits.

It carries out the reaction L-glutamyl-tRNA(Gln) + L-glutamine + ATP + H2O = L-glutaminyl-tRNA(Gln) + L-glutamate + ADP + phosphate + H(+). The catalysed reaction is L-aspartyl-tRNA(Asn) + L-glutamine + ATP + H2O = L-asparaginyl-tRNA(Asn) + L-glutamate + ADP + phosphate + 2 H(+). Allows the formation of correctly charged Asn-tRNA(Asn) or Gln-tRNA(Gln) through the transamidation of misacylated Asp-tRNA(Asn) or Glu-tRNA(Gln) in organisms which lack either or both of asparaginyl-tRNA or glutaminyl-tRNA synthetases. The reaction takes place in the presence of glutamine and ATP through an activated phospho-Asp-tRNA(Asn) or phospho-Glu-tRNA(Gln). This chain is Aspartyl/glutamyl-tRNA(Asn/Gln) amidotransferase subunit B, found in Borrelia hermsii (strain HS1 / DAH).